We begin with the raw amino-acid sequence, 292 residues long: ATP synthase gamma chain (292 aa).

Belongs to the ATPase gamma chain family. F-type ATPases have 2 components, CF(1) - the catalytic core - and CF(0) - the membrane proton channel. CF(1) has five subunits: alpha(3), beta(3), gamma(1), delta(1), epsilon(1). CF(0) has three main subunits: a, b and c.

Its subcellular location is the cell inner membrane. Functionally, produces ATP from ADP in the presence of a proton gradient across the membrane. The gamma chain is believed to be important in regulating ATPase activity and the flow of protons through the CF(0) complex. In Nitrobacter winogradskyi (strain ATCC 25391 / DSM 10237 / CIP 104748 / NCIMB 11846 / Nb-255), this protein is ATP synthase gamma chain.